We begin with the raw amino-acid sequence, 249 residues long: Aquaporin TIP2-1 (249 aa).

A run of 2 helical transmembrane segments spans residues 20–40 (AYVA…GSAI) and 54–74 (AGLV…VSVA). The NPA 1 motif lies at 83–85 (NPA). The next 3 membrane-spanning stretches (helical) occupy residues 102–122 (VFYW…LGFV), 141–161 (GVVF…ATAA), and 168–188 (LGTI…LAAG). Positions 196 to 198 (NPA) match the NPA 2 motif. Residues 217-237 (WVGPLVGGGLAGLVYGDVFIG) traverse the membrane as a helical segment.

The protein belongs to the MIP/aquaporin (TC 1.A.8) family. TIP (TC 1.A.8.10) subfamily.

It is found in the vacuole membrane. Aquaporins facilitate the transport of water and small neutral solutes across cell membranes. The sequence is that of Aquaporin TIP2-1 (TIP2-1) from Zea mays (Maize).